The chain runs to 1176 residues: Carbamoyl phosphate synthase arginine-specific large chain (1176 aa).

A mitochondrion-targeting transit peptide spans 1 to 11 (MLRSISIASRA). The interval 70 to 465 (SRSPDVKKVL…SLQKAIRQVD (396 aa)) is carboxyphosphate synthetic domain. Residues Arg-197, Arg-237, Gly-243, Gly-244, Lys-273, Leu-275, Glu-280, Gly-306, Thr-307, His-308, Gln-348, and Glu-362 each coordinate ATP. Residues 201 to 391 (VQALNEIDIP…LAYTAAKIAL (191 aa)) form the ATP-grasp 1 domain. Residues Gln-348, Glu-362, and Asn-364 each contribute to the Mg(2+) site. Gln-348, Glu-362, and Asn-364 together coordinate Mn(2+). Positions 466–610 (PNFAGFEAYW…YTSYNATTHD (145 aa)) are oligomerization domain. Positions 611–997 (VKFDNGTMVL…AYWAALLSVN (387 aa)) are carbamoyl phosphate synthetic domain. The 198-residue stretch at 734-931 (SSILDSIGVD…FIDTASAAIM (198 aa)) folds into the ATP-grasp 2 domain. Positions 770, 809, 811, 816, 841, 842, 843, 844, 884, and 902 each coordinate ATP. Mg(2+) is bound by residues Gln-884, Glu-902, and Asn-904. Residues Gln-884, Glu-902, and Asn-904 each coordinate Mn(2+). Residues 998 to 1137 (GMKLPKANSG…NPIPYSEGFK (140 aa)) form an allosteric domain region. Positions 999–1154 (MKLPKANSGI…RDFVGEAATT (156 aa)) constitute an MGS-like domain.

This sequence belongs to the CarB family. Heterodimer composed of 2 chains; the small (or glutamine) chain promotes the hydrolysis of glutamine to ammonia, which is used by the large (or ammonia) chain to synthesize carbamoyl phosphate. The cofactor is Mg(2+). Mn(2+) is required as a cofactor.

The protein localises to the mitochondrion. It catalyses the reaction hydrogencarbonate + L-glutamine + 2 ATP + H2O = carbamoyl phosphate + L-glutamate + 2 ADP + phosphate + 2 H(+). The enzyme catalyses hydrogencarbonate + NH4(+) + 2 ATP = carbamoyl phosphate + 2 ADP + phosphate + 2 H(+). Its pathway is amino-acid biosynthesis; L-arginine biosynthesis; carbamoyl phosphate from bicarbonate: step 1/1. Its function is as follows. Large subunit of the arginine-specific carbamoyl phosphate synthase (CPSase). CPSase catalyzes the formation of carbamoyl phosphate from the ammonia moiety of glutamine, hydrogencarbonate, and phosphate donated by ATP, constituting the first step of 2 biosynthetic pathways, one leading to arginine and/or urea and the other to pyrimidine nucleotides. The large subunit (synthetase) binds the substrates ammonia (free or transferred from glutamine from the small subunit), hydrogencarbonate and ATP and carries out an ATP-coupled ligase reaction, activating hydrogencarbonate by forming carboxy phosphate which reacts with ammonia to form carbamoyl phosphate. The chain is Carbamoyl phosphate synthase arginine-specific large chain (argA) from Cutaneotrichosporon cutaneum (Yeast).